We begin with the raw amino-acid sequence, 156 residues long: Small ribosomal subunit protein uS7 (156 aa).

Belongs to the universal ribosomal protein uS7 family. As to quaternary structure, part of the 30S ribosomal subunit. Contacts proteins S9 and S11.

In terms of biological role, one of the primary rRNA binding proteins, it binds directly to 16S rRNA where it nucleates assembly of the head domain of the 30S subunit. Is located at the subunit interface close to the decoding center, probably blocks exit of the E-site tRNA. The polypeptide is Small ribosomal subunit protein uS7 (Finegoldia magna (strain ATCC 29328 / DSM 20472 / WAL 2508) (Peptostreptococcus magnus)).